The primary structure comprises 990 residues: Glycine dehydrogenase (decarboxylating) (990 aa).

At lysine 726 the chain carries N6-(pyridoxal phosphate)lysine.

Belongs to the GcvP family. The glycine cleavage system is composed of four proteins: P, T, L and H. Pyridoxal 5'-phosphate is required as a cofactor.

The catalysed reaction is N(6)-[(R)-lipoyl]-L-lysyl-[glycine-cleavage complex H protein] + glycine + H(+) = N(6)-[(R)-S(8)-aminomethyldihydrolipoyl]-L-lysyl-[glycine-cleavage complex H protein] + CO2. Functionally, the glycine cleavage system catalyzes the degradation of glycine. The P protein binds the alpha-amino group of glycine through its pyridoxal phosphate cofactor; CO(2) is released and the remaining methylamine moiety is then transferred to the lipoamide cofactor of the H protein. This Rhodopseudomonas palustris (strain ATCC BAA-98 / CGA009) protein is Glycine dehydrogenase (decarboxylating).